We begin with the raw amino-acid sequence, 372 residues long: NAD(P)H-quinone oxidoreductase subunit 1 (372 aa).

Transmembrane regions (helical) follow at residues 27-47 (MLWL…GVLV), 97-117 (ILFT…WLIV), 128-148 (VGVG…GLLM), 166-186 (AAQS…VVMM), 204-224 (VLSW…ICAL), 266-286 (VLSA…PIPV), 308-328 (TVGI…AILL), and 347-367 (FLLP…LAFP).

This sequence belongs to the complex I subunit 1 family. As to quaternary structure, NDH-1 is composed of at least 11 different subunits.

The protein resides in the cellular thylakoid membrane. It carries out the reaction a plastoquinone + NADH + (n+1) H(+)(in) = a plastoquinol + NAD(+) + n H(+)(out). The enzyme catalyses a plastoquinone + NADPH + (n+1) H(+)(in) = a plastoquinol + NADP(+) + n H(+)(out). In terms of biological role, NDH-1 shuttles electrons from an unknown electron donor, via FMN and iron-sulfur (Fe-S) centers, to quinones in the respiratory and/or the photosynthetic chain. The immediate electron acceptor for the enzyme in this species is believed to be plastoquinone. Couples the redox reaction to proton translocation, and thus conserves the redox energy in a proton gradient. This chain is NAD(P)H-quinone oxidoreductase subunit 1, found in Synechococcus sp. (strain CC9311).